The sequence spans 123 residues: Defensin beta 118 (123 aa).

Residues 1-19 form the signal peptide; the sequence is MKLLLLALPMLVLLPQVIP. 3 disulfides stabilise this stretch: Cys-27/Cys-54, Cys-34/Cys-48, and Cys-38/Cys-55. A propeptide spanning residues 65–123 is cleaved from the precursor; that stretch reads VPTTSPTPLSDSTRGVIDDILTVRFTTDYFEVSSKKNMVEESEVGQGTQTSLPNVHHSS. The segment at 100–123 is disordered; sequence KNMVEESEVGQGTQTSLPNVHHSS. Residues 109 to 123 are compositionally biased toward polar residues; the sequence is GQGTQTSLPNVHHSS.

It belongs to the beta-defensin family. In terms of processing, the three-dimensional structure formed by the three intramolecular disulfide bridges is indispensable for antimicrobial activity.

It is found in the secreted. In terms of biological role, host defense peptide that exhibits antimicrobial activity against both Gram-negative bacteria, such as E.coli and S.typhimurium, and Gram-positive bacteria, such as S.aureus and B.subtilis. Inhibits cell adhesion of E.coli on intestinal epithelial enterocytes. Causes rapid permeabilization of both the outer and inner membrane of E.coli, leading to morphological alterations on the bacterial surface. Binds to bacterial lipopolysaccharides (LPS) with high affinity, and may thereby be involved in immunoregulation through LPS neutralization. May contribute to epididymal innate immunity and protect the sperm against attack by microorganisms. This is Defensin beta 118 (DEFB118) from Pongo pygmaeus (Bornean orangutan).